A 386-amino-acid chain; its full sequence is uncharacterized protein (386 aa).

Helical transmembrane passes span 3 to 23 (WFSL…LVAI), 42 to 62 (LVGH…IFLW), 72 to 92 (FASF…SLFG), 102 to 122 (VPTI…LGVF), 145 to 165 (ILST…IAYF), 183 to 203 (FGGH…WLLL), 212 to 232 (WFLN…QIFL), 244 to 264 (TWGY…ITLV), 276 to 296 (ILVL…MIVG), 308 to 328 (VIAS…QELG), and 333 to 353 (LGKF…FLSS).

To R.prowazekii RP382.

It is found in the cell membrane. This is an uncharacterized protein from Aquifex aeolicus (strain VF5).